We begin with the raw amino-acid sequence, 322 residues long: Interferon regulatory factor 1 (322 aa).

Residues 5-113 (RMRMRPWLEM…SAVRVYRMLP (109 aa)) constitute a DNA-binding region (IRF tryptophan pentad repeat). Lysine 78 is subject to N6-acetyllysine. Residues 92–164 (EEVKDQSRNK…STLPDDHSNY (73 aa)) are disordered. The segment covering 146-157 (DTFSDGLSSSTL) has biased composition (polar residues). Residues lysine 276 and lysine 296 each participate in a glycyl lysine isopeptide (Lys-Gly) (interchain with G-Cter in SUMO) cross-link.

It belongs to the IRF family. Monomer. Homodimer. Interacts with EP300. Interacts with MYD88. Interacts with PIAS3. Interacts with SPOP. Post-translationally, phosphorylated by CK2 and this positively regulates its activity. Sumoylation represses the transcriptional activity and displays enhanced resistance to protein degradation. Sumoylated by UBE2I/UBC9 and SUMO1. Inactivates the tumor suppressor activity. Elevated levels in tumor cells. Major site is Lys-276. Sumoylation is enhanced by PIAS3. Desumoylated by SENP1 in tumor cells and appears to compete with ubiquitination on C-terminal sites. In terms of processing, ubiquitinated in a SPOP-depedent manner. Appears to compete with sumoylation on C-terminal sites.

The protein resides in the nucleus. Its subcellular location is the cytoplasm. Activated by MYD88. Functionally, transcriptional regulator which displays a remarkable functional diversity in the regulation of cellular responses. Regulates transcription of IFN and IFN-inducible genes, host response to viral and bacterial infections, regulation of many genes expressed during hematopoiesis, inflammation, immune responses and cell proliferation and differentiation, regulation of the cell cycle and induction of growth arrest and programmed cell death following DNA damage. Stimulates both innate and acquired immune responses through the activation of specific target genes and can act as a transcriptional activator and repressor regulating target genes by binding to an interferon-stimulated response element (ISRE) in their promoters. Has an essentail role in IFNG-dependent immunity to mycobacteria. Binds to a consensus sequence in gene promoters. Its target genes for transcriptional activation activity include: genes involved in anti-viral response, such as IFN-alpha/beta, RIGI, TNFSF10/TRAIL, ZBP1, OAS1/2, PIAS1/GBP, EIF2AK2/PKR and RSAD2/viperin; antibacterial response, such as GBP2, GBP5 and NOS2/INOS; anti-proliferative response, such as p53/TP53, LOX and CDKN1A; apoptosis, such as BBC3/PUMA, CASP1, CASP7 and CASP8; immune response, such as IL7, IL12A/B and IL15, PTGS2/COX2 and CYBB; DNA damage responses and DNA repair, such as POLQ/POLH; MHC class I expression, such as TAP1, PSMB9/LMP2, PSME1/PA28A, PSME2/PA28B and B2M and MHC class II expression, such as CIITA; metabolic enzymes, such as ACOD1/IRG1. Represses genes involved in anti-proliferative response, such as BIRC5/survivin, CCNB1, CCNE1, CDK1, CDK2 and CDK4 and in immune response, such as FOXP3, IL4, ANXA2 and TLR4. Stimulates p53/TP53-dependent transcription through enhanced recruitment of EP300 leading to increased acetylation of p53/TP53. Plays an important role in immune response directly affecting NK maturation and activity, macrophage production of IL12, Th1 development and maturation of CD8+ T-cells. Also implicated in the differentiation and maturation of dendritic cells and in the suppression of regulatory T (Treg) cells development. Acts as a tumor suppressor and plays a role not only in antagonism of tumor cell growth but also in stimulating an immune response against tumor cells. This is Interferon regulatory factor 1 (IRF1) from Bos taurus (Bovine).